Reading from the N-terminus, the 290-residue chain is Homeobox protein EMX1 (290 aa).

The segment at residues 192 to 251 is a DNA-binding region (homeobox); sequence PKRIRTAFSPSQLLRLERAFEKNHYVVGAERKQLAGSLSLSETQVKVWFQNRRTKYKRQK. The tract at residues 249–290 is disordered; sequence RQKLEEEGPESEQKKKGSHHINRWRIATKQANGEDIDVTSND. Basic and acidic residues predominate over residues 250–263; sequence QKLEEEGPESEQKK.

Belongs to the EMX homeobox family. In terms of assembly, interacts with WRD11 (via the N-terminal and the central portion of the protein); the interaction associates EMX1 with GLI3. Cerebral cortex.

The protein localises to the nucleus. It is found in the cytoplasm. Transcription factor, which in cooperation with EMX2, acts to generate the boundary between the roof and archipallium in the developing brain. May function in combinations with OTX1/2 to specify cell fates in the developing central nervous system. The protein is Homeobox protein EMX1 of Homo sapiens (Human).